The primary structure comprises 105 residues: Large ribosomal subunit protein uL24 (105 aa).

Belongs to the universal ribosomal protein uL24 family. Part of the 50S ribosomal subunit.

Functionally, one of two assembly initiator proteins, it binds directly to the 5'-end of the 23S rRNA, where it nucleates assembly of the 50S subunit. Its function is as follows. One of the proteins that surrounds the polypeptide exit tunnel on the outside of the subunit. The chain is Large ribosomal subunit protein uL24 from Methylocella silvestris (strain DSM 15510 / CIP 108128 / LMG 27833 / NCIMB 13906 / BL2).